The primary structure comprises 361 residues: Protein RecA (361 aa).

An ATP-binding site is contributed by 77 to 84 (GPESSGKT).

It belongs to the RecA family.

It is found in the cytoplasm. Can catalyze the hydrolysis of ATP in the presence of single-stranded DNA, the ATP-dependent uptake of single-stranded DNA by duplex DNA, and the ATP-dependent hybridization of homologous single-stranded DNAs. It interacts with LexA causing its activation and leading to its autocatalytic cleavage. This chain is Protein RecA, found in Sinorhizobium medicae (strain WSM419) (Ensifer medicae).